Here is a 274-residue protein sequence, read N- to C-terminus: Large ribosomal subunit protein uL2 (274 aa).

Positions 224 to 256 (VMNPVDHPHGGGEGKTGEGRHPVDPWGNLTKGY) are disordered. Residues 229 to 246 (DHPHGGGEGKTGEGRHPV) show a composition bias toward basic and acidic residues.

It belongs to the universal ribosomal protein uL2 family. In terms of assembly, part of the 50S ribosomal subunit. Forms a bridge to the 30S subunit in the 70S ribosome.

Functionally, one of the primary rRNA binding proteins. Required for association of the 30S and 50S subunits to form the 70S ribosome, for tRNA binding and peptide bond formation. It has been suggested to have peptidyltransferase activity; this is somewhat controversial. Makes several contacts with the 16S rRNA in the 70S ribosome. This Polaromonas naphthalenivorans (strain CJ2) protein is Large ribosomal subunit protein uL2.